Reading from the N-terminus, the 320-residue chain is AA9 family lytic polysaccharide monooxygenase-like protein CEL1 (320 aa).

An N-terminal signal peptide occupies residues 1–29 (MRLPSRQQVLKMLATFSLALGLFAAKVQA). Disulfide bonds link Cys78–Cys199 and Cys121–Cys126. His109 serves as a coordination point for Cu(2+). The N-linked (GlcNAc...) asparagine glycan is linked to Asn163. 2 residues coordinate O2: His189 and Gln194. Tyr196 is a Cu(2+) binding site. The tract at residues 255–284 (GSGGNGGSPTTTPHTTTPITTSPPPTSTPG) is disordered. Residues 262 to 274 (SPTTTPHTTTPIT) show a composition bias toward low complexity. The CBM1 domain occupies 284-320 (GTIPQYGQCGGIGWTGGTGCVAPYQCKVINDYYSQCL).

The protein belongs to the polysaccharide monooxygenase AA9 family. Requires Cu(2+) as cofactor.

It localises to the secreted. It carries out the reaction [(1-&gt;4)-beta-D-glucosyl]n+m + reduced acceptor + O2 = 4-dehydro-beta-D-glucosyl-[(1-&gt;4)-beta-D-glucosyl]n-1 + [(1-&gt;4)-beta-D-glucosyl]m + acceptor + H2O.. Functionally, lytic polysaccharide monooxygenase (LPMO)-like protein that binds strongly to cellulose. Seems not to acts as an endoglucanase, a ceUobiohydrolase able to hydrolyze fluorogenic cellobiosides, a /3-glucosidase, a xylanase, nor a cellobiose:quinone oxidoreductase. In Agaricus bisporus (White button mushroom), this protein is AA9 family lytic polysaccharide monooxygenase-like protein CEL1.